Reading from the N-terminus, the 91-residue chain is Small ribosomal subunit protein uS17 (91 aa).

This sequence belongs to the universal ribosomal protein uS17 family. Part of the 30S ribosomal subunit.

Its function is as follows. One of the primary rRNA binding proteins, it binds specifically to the 5'-end of 16S ribosomal RNA. The polypeptide is Small ribosomal subunit protein uS17 (Psychrobacter cryohalolentis (strain ATCC BAA-1226 / DSM 17306 / VKM B-2378 / K5)).